Here is a 392-residue protein sequence, read N- to C-terminus: Heat-inducible transcription repressor HrcA (392 aa).

This sequence belongs to the HrcA family.

Its function is as follows. Negative regulator of class I heat shock genes (grpE-dnaK-dnaJ and groELS operons). Prevents heat-shock induction of these operons. This Synechococcus sp. (strain JA-3-3Ab) (Cyanobacteria bacterium Yellowstone A-Prime) protein is Heat-inducible transcription repressor HrcA.